The sequence spans 138 residues: MLIPKRVKYRRQHRPTRSGVSKGGNRINFGDYAIQALEPAYITNRQIEAARIAINRHVKRGGKVWINIFPDRPLTQKPLGVRMGSGKGPVEKWVANVKPGRILFEMTYPNEATAIEALRRAGQKLPCKVRIIKKEDQF.

The span at 1-16 (MLIPKRVKYRRQHRPT) shows a compositional bias: basic residues. Positions 1-23 (MLIPKRVKYRRQHRPTRSGVSKG) are disordered.

Belongs to the universal ribosomal protein uL16 family. Part of the 50S ribosomal subunit.

Binds 23S rRNA and is also seen to make contacts with the A and possibly P site tRNAs. In Corynebacterium aurimucosum (strain ATCC 700975 / DSM 44827 / CIP 107346 / CN-1) (Corynebacterium nigricans), this protein is Large ribosomal subunit protein uL16.